The chain runs to 237 residues: Thiamine-phosphate synthase (237 aa).

Residues 41–45 (QLRDK) and N73 each bind 4-amino-2-methyl-5-(diphosphooxymethyl)pyrimidine. Positions 74 and 93 each coordinate Mg(2+). Residue S112 participates in 4-amino-2-methyl-5-(diphosphooxymethyl)pyrimidine binding. Residue 143 to 145 (TPT) participates in 2-[(2R,5Z)-2-carboxy-4-methylthiazol-5(2H)-ylidene]ethyl phosphate binding. Residue K146 coordinates 4-amino-2-methyl-5-(diphosphooxymethyl)pyrimidine. G192 serves as a coordination point for 2-[(2R,5Z)-2-carboxy-4-methylthiazol-5(2H)-ylidene]ethyl phosphate.

This sequence belongs to the thiamine-phosphate synthase family. It depends on Mg(2+) as a cofactor.

It carries out the reaction 2-[(2R,5Z)-2-carboxy-4-methylthiazol-5(2H)-ylidene]ethyl phosphate + 4-amino-2-methyl-5-(diphosphooxymethyl)pyrimidine + 2 H(+) = thiamine phosphate + CO2 + diphosphate. The enzyme catalyses 2-(2-carboxy-4-methylthiazol-5-yl)ethyl phosphate + 4-amino-2-methyl-5-(diphosphooxymethyl)pyrimidine + 2 H(+) = thiamine phosphate + CO2 + diphosphate. It catalyses the reaction 4-methyl-5-(2-phosphooxyethyl)-thiazole + 4-amino-2-methyl-5-(diphosphooxymethyl)pyrimidine + H(+) = thiamine phosphate + diphosphate. The protein operates within cofactor biosynthesis; thiamine diphosphate biosynthesis; thiamine phosphate from 4-amino-2-methyl-5-diphosphomethylpyrimidine and 4-methyl-5-(2-phosphoethyl)-thiazole: step 1/1. Functionally, condenses 4-methyl-5-(beta-hydroxyethyl)thiazole monophosphate (THZ-P) and 2-methyl-4-amino-5-hydroxymethyl pyrimidine pyrophosphate (HMP-PP) to form thiamine monophosphate (TMP). This is Thiamine-phosphate synthase from Arthrobacter sp. (strain FB24).